Reading from the N-terminus, the 24-residue chain is Chaperonin GroEL (24 aa).

Belongs to the chaperonin (HSP60) family. Forms a cylinder of 14 subunits composed of two heptameric rings stacked back-to-back. Interacts with the co-chaperonin GroES.

It localises to the cytoplasm. The enzyme catalyses ATP + H2O + a folded polypeptide = ADP + phosphate + an unfolded polypeptide.. In terms of biological role, together with its co-chaperonin GroES, plays an essential role in assisting protein folding. The GroEL-GroES system forms a nano-cage that allows encapsulation of the non-native substrate proteins and provides a physical environment optimized to promote and accelerate protein folding. The protein is Chaperonin GroEL of Acinetobacter calcoaceticus.